Reading from the N-terminus, the 411-residue chain is MAKINDNYLKLKAGYLFPEIGRRVRAFAAANPEAKVIRLGIGDVTQPLTPTILKAFHDAVDDLASENSFMGYGPEQGYDFLIDAIIEKSYKPLGVDLKTTEMFISDGSKCDCANILDIFALDNTVAIGDPVYPVYNDTNVMIGRTGDADDKGYYKGLVYMPCTEENGFFPAYPKEKVDMIYLCFPNNPTGAVATKAQLKGWVDYALANDSIILFDAAYEAFITDPSIPHSIYEVEGAKKCAIEFRSFSKTAGFTGVRCGLVVVPDELEGTTSNGEKYSFNKLWLRRQTTKFNGASYPVQKAAAAVYTEQGWKETQANIDYYMENARIIREGLSAAGVTVYGGVNAPYIWLKTPAGLTSWDFFDKLLNDCHVVGTPGSGFGPSGEGYFRLSAFGNRDNVVEAVERIKKNLKK.

Substrate-binding residues include tyrosine 15 and glycine 42. Pyridoxal 5'-phosphate contacts are provided by residues tyrosine 72, serine 108–lysine 109, tyrosine 132, asparagine 187, tyrosine 218, and serine 246–serine 248. The substrate site is built by lysine 109, tyrosine 132, and asparagine 187. Lysine 249 carries the post-translational modification N6-(pyridoxal phosphate)lysine. Residues arginine 257 and asparagine 292 each contribute to the pyridoxal 5'-phosphate site. Residues asparagine 292 and arginine 388 each coordinate substrate.

The protein belongs to the class-I pyridoxal-phosphate-dependent aminotransferase family. LL-diaminopimelate aminotransferase subfamily. In terms of assembly, homodimer. It depends on pyridoxal 5'-phosphate as a cofactor.

It catalyses the reaction (2S,6S)-2,6-diaminopimelate + 2-oxoglutarate = (S)-2,3,4,5-tetrahydrodipicolinate + L-glutamate + H2O + H(+). The protein operates within amino-acid biosynthesis; L-lysine biosynthesis via DAP pathway; LL-2,6-diaminopimelate from (S)-tetrahydrodipicolinate (aminotransferase route): step 1/1. Functionally, involved in the synthesis of meso-diaminopimelate (m-DAP or DL-DAP), required for both lysine and peptidoglycan biosynthesis. Catalyzes the direct conversion of tetrahydrodipicolinate to LL-diaminopimelate. The sequence is that of LL-diaminopimelate aminotransferase from Citrifermentans bemidjiense (strain ATCC BAA-1014 / DSM 16622 / JCM 12645 / Bem) (Geobacter bemidjiensis).